A 1286-amino-acid polypeptide reads, in one-letter code: CLIP-associating protein 2 (1286 aa).

A golgi localization region spans residues 1 to 40 (MRRLICKRICDYKSFDDEESVDGNRPSSAASAFKVPAPKT). Phosphoserine is present on residues Ser-14 and Ser-20. The interval 17 to 70 (DEESVDGNRPSSAASAFKVPAPKTPGNPVNSARKPGSAGGPKAGGTSKEGGAGA) is disordered. Gly residues predominate over residues 53 to 69 (SAGGPKAGGTSKEGGAG). The tract at residues 66-317 (GGAGAVDEDD…KSLQTYLKSS (252 aa)) is TOG 1. 3 HEAT repeats span residues 179-214 (HGAE…IRHT), 215-251 (HVPR…EWQT), and 256-293 (RHAA…HFPG). 2 disordered regions span residues 320–350 (VASL…TANP) and 355–374 (GRVS…LQRS). Phosphoserine is present on residues Ser-322, Ser-333, and Ser-336. A compositionally biased stretch (low complexity) spans 322-340 (SLPQSDRSSSSSQESLNRP). Positions 341-350 (FSSKWSTANP) are enriched in polar residues. 3 positions are modified to phosphoserine: Ser-374, Ser-376, and Ser-413. Residues 410-473 (SYASLEDTSD…GSRSGSPGRV (64 aa)) are disordered. Residues 417–431 (TSDKMDGTASEDGRV) show a composition bias toward basic and acidic residues. Residues 450 to 565 (RGRSRTKMVS…GPGYGMSQSS (116 aa)) are interaction with microtubules, MAPRE1 and MAPRE3. The span at 459–473 (SQSQPGSRSGSPGRV) shows a compositional bias: low complexity. Phosphoserine occurs at positions 461, 465, 469, 484, and 495. The interval 492–566 (NSASAQKRSK…PGYGMSQSSR (75 aa)) is disordered. Residues 500 to 503 (SKIP) carry the SXIP motif 1; mediates interaction with MAPRE1 and targeting to microtubule plus ends motif. Ser-513 carries the post-translational modification Phosphoserine. Positions 523–526 (SRIP) match the SXIP motif 2; mediates interaction with MAPRE1 and targeting to microtubule plus ends motif. Phosphoserine occurs at positions 531, 535, 570, 572, 581, 614, and 620. Basic and acidic residues predominate over residues 606-616 (RYESYGMHSDD). A disordered region spans residues 606-638 (RYESYGMHSDDDANSDASSACSERSYSSRNGSI). Low complexity predominate over residues 620–634 (SDASSACSERSYSSR). A TOG 2 region spans residues 642 to 873 (MRQTEDVAEV…TKLLHNHLRN (232 aa)). 2 HEAT repeats span residues 702 to 739 (KVFS…KMGA) and 764 to 801 (LQFN…QMDP). Residue Thr-779 is modified to Phosphothreonine. Positions 864-1286 (TKLLHNHLRN…DPTTDVSGQS (423 aa)) are interaction with RSN and localization to the Golgi and kinetochores. Disordered stretches follow at residues 870–920 (HLRN…FDYD) and 944–990 (SFRS…QPAL). Polar residues-rich tracts occupy residues 872–884 (RNTG…SMGS) and 893–914 (SPAN…TLSP). Ser-884 bears the Phosphoserine mark. Ser-944, Ser-947, Ser-1005, and Ser-1021 each carry phosphoserine. The segment covering 947 to 964 (SQEDMSEPLKRDPKKEDG) has biased composition (basic and acidic residues). Positions 1009 to 1286 (RDYNPYNYSD…DPTTDVSGQS (278 aa)) are required for cortical localization. HEAT repeat units follow at residues 1046–1083 (LDHS…TQEE), 1090–1127 (EHFK…HQPA), and 1208–1245 (LLLP…VIGD).

It belongs to the CLASP family. Interacts with microtubules. Interacts with MAPRE1; probably required for targeting to the growing microtubule plus ends. Interacts with CLIP2, ERC1, MAPRE3, PHLDB2 and RSN. The interaction with ERC1 may be mediated by PHLDB2. Interacts with GCC2; recruits CLASP2 to Golgi membranes. Interacts with MACF1. Interacts with SOGA1 and MTCL1. Post-translationally, phosphorylated by GSK3B. Phosphorylation by GSK3B may negatively regulate binding to microtubule lattices in lamella.

The protein resides in the cytoplasm. It is found in the cytoskeleton. Its subcellular location is the microtubule organizing center. It localises to the centrosome. The protein localises to the chromosome. The protein resides in the centromere. It is found in the kinetochore. Its subcellular location is the spindle. It localises to the golgi apparatus. The protein localises to the trans-Golgi network. The protein resides in the cell membrane. It is found in the cell projection. Its subcellular location is the ruffle membrane. It localises to the cell cortex. Its function is as follows. Microtubule plus-end tracking protein that promotes the stabilization of dynamic microtubules. Involved in the nucleation of noncentrosomal microtubules originating from the trans-Golgi network (TGN). Required for the polarization of the cytoplasmic microtubule arrays in migrating cells towards the leading edge of the cell. May act at the cell cortex to enhance the frequency of rescue of depolymerizing microtubules by attaching their plus-ends to cortical platforms composed of ERC1 and PHLDB2. This cortical microtubule stabilizing activity is regulated at least in part by phosphatidylinositol 3-kinase signaling. Also performs a similar stabilizing function at the kinetochore which is essential for the bipolar alignment of chromosomes on the mitotic spindle. Acts as a mediator of ERBB2-dependent stabilization of microtubules at the cell cortex. The chain is CLIP-associating protein 2 (Clasp2) from Rattus norvegicus (Rat).